Here is a 188-residue protein sequence, read N- to C-terminus: Peptidyl-tRNA hydrolase (188 aa).

Y14 provides a ligand contact to tRNA. The active-site Proton acceptor is the H19. Residues Y64, N66, and N112 each coordinate tRNA.

Belongs to the PTH family. As to quaternary structure, monomer.

The protein localises to the cytoplasm. The enzyme catalyses an N-acyl-L-alpha-aminoacyl-tRNA + H2O = an N-acyl-L-amino acid + a tRNA + H(+). Hydrolyzes ribosome-free peptidyl-tRNAs (with 1 or more amino acids incorporated), which drop off the ribosome during protein synthesis, or as a result of ribosome stalling. In terms of biological role, catalyzes the release of premature peptidyl moieties from peptidyl-tRNA molecules trapped in stalled 50S ribosomal subunits, and thus maintains levels of free tRNAs and 50S ribosomes. This Bacillus velezensis (strain DSM 23117 / BGSC 10A6 / LMG 26770 / FZB42) (Bacillus amyloliquefaciens subsp. plantarum) protein is Peptidyl-tRNA hydrolase.